A 447-amino-acid polypeptide reads, in one-letter code: Histidine--tRNA ligase (447 aa).

Belongs to the class-II aminoacyl-tRNA synthetase family. As to quaternary structure, homodimer.

The protein localises to the cytoplasm. The catalysed reaction is tRNA(His) + L-histidine + ATP = L-histidyl-tRNA(His) + AMP + diphosphate + H(+). The sequence is that of Histidine--tRNA ligase (hisS) from Synechocystis sp. (strain ATCC 27184 / PCC 6803 / Kazusa).